A 418-amino-acid chain; its full sequence is UDP-N-acetylglucosamine 1-carboxyvinyltransferase (418 aa).

22 to 23 is a binding site for phosphoenolpyruvate; it reads KN. R92 provides a ligand contact to UDP-N-acetyl-alpha-D-glucosamine. C116 serves as the catalytic Proton donor. C116 bears the 2-(S-cysteinyl)pyruvic acid O-phosphothioketal mark. Residues 121–125, D305, and L327 contribute to the UDP-N-acetyl-alpha-D-glucosamine site; that span reads RPIDL.

This sequence belongs to the EPSP synthase family. MurA subfamily.

The protein resides in the cytoplasm. The catalysed reaction is phosphoenolpyruvate + UDP-N-acetyl-alpha-D-glucosamine = UDP-N-acetyl-3-O-(1-carboxyvinyl)-alpha-D-glucosamine + phosphate. The protein operates within cell wall biogenesis; peptidoglycan biosynthesis. Cell wall formation. Adds enolpyruvyl to UDP-N-acetylglucosamine. The chain is UDP-N-acetylglucosamine 1-carboxyvinyltransferase from Campylobacter lari (strain RM2100 / D67 / ATCC BAA-1060).